The primary structure comprises 1479 residues: MIERGKFRSLTLVNWNGFFARTFDLDELVTTLSGGNGAGKSTTMAAFITALIPDLTLLHFRNTTEAGATSGSRDKGLHGKLRAGVCYSTLDVVNSRHQRVLVGVRLQQVAGRDRKVDIKPFTIQGLPTAIQPTQILTQVVGDRQARVLSLQELKDRVEEMEGVQFKQFNSITDYHSLMFDLGVVPRRLRSASDRSKFYRLIEASLYGGISSAITRSLRDYLLPENSGVRKAFQDMEAALRENRMTLEAIRVTQSDRDLFKHLISEATSYVAADYMRHANERRIHLDGALELRRDLFSSRKQLSSEQYRHVEMARELAEQSGAEGDLETDYQAASDHLNLVQTAMRQQEKIERYNADLEELSYRLEEQNEVVEEAREQQAENEERADAAELEVDELKSQLADYQQALDVQQTRAIQYQQAQQALERARTLCQLPDLTADNADEWLDSYQAKEQEATEILLMLEQKLSVADAAHGQFEQAYQLVSKIAGAVNRNEAWQVARDLLRDSSSQRYQAERVQPLRMRLSELEQRLREQQDAERLLQDFSKRNGQDYQPEELESLQQELDARIETLSSLVAEAGERRMALRQELEQIQLRIQKLTTRAPVWLAAQEMLTQLSEQSGETFEDSRQVTEFMQQLLERERETTVERDDIASRKRQIEAQIERLSQPGGSEDPRLNALAERFGGVLLSEIYDDVTLDDAPYFSALYGPSRHAIVVADLSLVREQLAGLEDCPEDLYLIEGDPQSFDDSVFAVEELERAVVVKVAERQWRYSRFPEVPLFGRAAREMRLESLRDEREALAEQYATLSFDVQKTQRLHQSFSRFIGTHLAVVFDEDPEAEIRTLSSRRGELDRAIASFDGENQQQRQQYEQAKEASVQLNKLIPRISLLCDETLQDRVEEIRAELDETEESARFIQQHGATLVKLEPLVSVLQSDPQQHEQLQEDYAQAQNAQRQAKQQAFALTEVVQRRAHFSYADSAGMLGENAGLNDKLRHRLELAEAERTKAREQLRQHQAQLTQYSQVQASLKSSYDAKQDMLKELTQELQDIGVRADADAEERARQRRDELHAALSTNRSRRNQLEKQITFCEAEMDSLQKKLRKLERDYHQMREQVVTAKAGWCAVMRLVKDNGVERRLHRRELAYMEGDELRSMSDKALGALRLAVADNEHLRDVLRLSEDPKRPERKIQFYIAVYQHLRERIRQDIIRTDDPVEAIEQMEIELNRLTEELTAREQMLAISSRSVANIIRKTIQREQNRIRMLNQGLQAVAFGQVKSVRLNVNVRETHTTLLNVLSEQQEMHQDLFNSNRLTFSEALAKLYQRLNPEIDMGQRTPQTIGEELLDYRNYLEMEVEVNRGADGWLRAESGALSTGEAIGTGMSILVMVVQSWEEESKRLRGKDIIPCRLLFLDEAARLDAKSIATLFELCDRLEMQLVIAAPENISPEKGTTYKLVRKVYQNNEHVHVVGLRGFGAEAPDTQEQAS.

Residue 34–41 coordinates ATP; sequence GGNGAGKS. Coiled-coil stretches lie at residues 337–418, 511–603, 780–810, 847–1116, and 1206–1265; these read LNLV…QYQQ, QAER…RAPV, RAAREMRLESLRDEREALAEQYATLSFDVQK, ELDR…AKAG, and DDPV…LQAV. The interval 666–783 is flexible hinge; it reads PGGSEDPRLN…EVPLFGRAAR (118 aa).

Belongs to the SMC family. MukB subfamily. Homodimerization via its hinge domain. Binds to DNA via its C-terminal region. Interacts, and probably forms a ternary complex, with MukE and MukF via its C-terminal region. The complex formation is stimulated by calcium or magnesium. Interacts with tubulin-related protein FtsZ.

Its subcellular location is the cytoplasm. It is found in the nucleoid. Its function is as follows. Plays a central role in chromosome condensation, segregation and cell cycle progression. Functions as a homodimer, which is essential for chromosome partition. Involved in negative DNA supercoiling in vivo, and by this means organize and compact chromosomes. May achieve or facilitate chromosome segregation by condensation DNA from both sides of a centrally located replisome during cell division. The protein is Chromosome partition protein MukB of Pectobacterium carotovorum subsp. carotovorum (strain PC1).